The chain runs to 439 residues: Arginine biosynthesis bifunctional protein ArgJ, mitochondrial (439 aa).

Positions 175, 201, 212, 301, 434, and 439 each coordinate substrate. The Nucleophile role is filled by Thr-212.

It belongs to the ArgJ family. As to quaternary structure, heterodimer of an alpha and a beta chain. In terms of processing, the alpha and beta chains are autoproteolytically processed from a single precursor protein within the mitochondrion.

It localises to the mitochondrion matrix. It carries out the reaction N(2)-acetyl-L-ornithine + L-glutamate = N-acetyl-L-glutamate + L-ornithine. The catalysed reaction is L-glutamate + acetyl-CoA = N-acetyl-L-glutamate + CoA + H(+). The protein operates within amino-acid biosynthesis; L-arginine biosynthesis; L-ornithine and N-acetyl-L-glutamate from L-glutamate and N(2)-acetyl-L-ornithine (cyclic): step 1/1. It participates in amino-acid biosynthesis; L-arginine biosynthesis; N(2)-acetyl-L-ornithine from L-glutamate: step 1/4. Its function is as follows. Catalyzes two activities which are involved in the cyclic version of arginine biosynthesis: the synthesis of acetylglutamate from glutamate and acetyl-CoA, and of ornithine by transacetylation between acetylornithine and glutamate. This chain is Arginine biosynthesis bifunctional protein ArgJ, mitochondrial, found in Candida albicans (strain WO-1) (Yeast).